Here is a 331-residue protein sequence, read N- to C-terminus: Glycerol-3-phosphate dehydrogenase [NAD(P)+] (331 aa).

Residues Trp-11 and Lys-101 each coordinate NADPH. Sn-glycerol 3-phosphate contacts are provided by Lys-101, Gly-132, and Ser-134. Ala-136 is an NADPH binding site. Sn-glycerol 3-phosphate-binding residues include Lys-188, Asp-241, Ser-251, Arg-252, and Asn-253. Catalysis depends on Lys-188, which acts as the Proton acceptor. Arg-252 provides a ligand contact to NADPH. Glu-278 serves as a coordination point for NADPH.

Belongs to the NAD-dependent glycerol-3-phosphate dehydrogenase family.

The protein localises to the cytoplasm. The catalysed reaction is sn-glycerol 3-phosphate + NAD(+) = dihydroxyacetone phosphate + NADH + H(+). The enzyme catalyses sn-glycerol 3-phosphate + NADP(+) = dihydroxyacetone phosphate + NADPH + H(+). It participates in membrane lipid metabolism; glycerophospholipid metabolism. Its function is as follows. Catalyzes the reduction of the glycolytic intermediate dihydroxyacetone phosphate (DHAP) to sn-glycerol 3-phosphate (G3P), the key precursor for phospholipid synthesis. This Phytoplasma mali (strain AT) protein is Glycerol-3-phosphate dehydrogenase [NAD(P)+].